Reading from the N-terminus, the 1032-residue chain is Integrin alpha-4 (1032 aa).

A signal peptide spans 1–33; the sequence is MAWEARREPGPRRAAVRETVMLLLCLGVPTGRP. FG-GAP repeat units lie at residues 35–100, 110–177, 185–237, 238–291, 292–351, 355–412, and 416–478; these read NVDT…PGQT, NGEP…TELS, QDYV…KYKA, FLDK…EKEL, NILH…GAVM, ETNL…GISS, and QRIE…HPES. The Extracellular portion of the chain corresponds to 35–977; it reads NVDTESALLY…HHQRPKRYFT (943 aa). A glycan (N-linked (GlcNAc...) asparagine) is linked at N79. Residues C91 and C101 are joined by a disulfide bond. An N-linked (GlcNAc...) asparagine glycan is attached at N138. Disulfide bonds link C144-C165 and C183-C198. N-linked (GlcNAc...) asparagine glycosylation is present at N229. D314, N316, D318, D322, D377, D379, D381, D385, D439, D441, N443, Y445, and D447 together coordinate Ca(2+). N-linked (GlcNAc...) asparagine glycosylation occurs at N480. Disulfide bonds link C486–C495 and C501–C557. N518 and N538 each carry an N-linked (GlcNAc...) asparagine glycan. Residues 606–616 carry the SG1 motif; sequence KKEKDIMKKTI. C622 and C627 are oxidised to a cystine. N-linked (GlcNAc...) asparagine glycans are attached at residues N626, N645, and N660. C698 and C711 are disulfide-bonded. N-linked (GlcNAc...) asparagine glycosylation is found at N806 and N821. 2 disulfides stabilise this stretch: C852–C890 and C897–C902. The helical transmembrane segment at 978-1001 threads the bilayer; that stretch reads IVIISSSLLLGLIVLLLISYVMWK. Topologically, residues 1002-1032 are cytoplasmic; sequence AGFFKRQYKSILQEENRRDSWSYINSKSNDD. Residues 1003-1007 carry the GFFKR motif motif; it reads GFFKR. At S1021 the chain carries Phosphoserine.

Belongs to the integrin alpha chain family. In terms of assembly, heterodimer of an alpha and a beta subunit. The alpha subunit can sometimes be cleaved into two non-covalently associated fragments. Alpha-4 associates with either beta-1 or beta-7. Alpha-4 interacts with PXN, LPXN, and TGFB1I1/HIC5. Interacts with CSPG4 through CSPG4 chondroitin sulfate glycosaminoglycan. Interacts with JAML; integrin alpha-4/beta-1 may regulate leukocyte to endothelial cells adhesion by controlling JAML homodimerization. ITGA4:ITGB1 is found in a ternary complex with CX3CR1 and CX3CL1. Interacts with MDK. ITGA4:ITGB1 interacts with MDK; this interaction mediates MDK-induced osteoblast cells migration through PXN phosphorylation. Integrin ITGA4:ITGB1 interacts with SVEP1 (via Sushi domain 21); thereby inhibits Ca(2+) intracellular signaling and as a result represses vasocontraction. ITGA4:ITGB1 interacts with SELP. ITGA4:ITGB1 interacts with BCAM. In terms of processing, phosphorylation on Ser-1027 inhibits PXN binding. In terms of tissue distribution, expressed in vascular smooth muscle cells (at protein level).

It localises to the membrane. In terms of biological role, integrins alpha-4/beta-1 (VLA-4) and alpha-4/beta-7 are receptors for fibronectin. They recognize one or more domains within the alternatively spliced CS-1 and CS-5 regions of fibronectin. They are also receptors for VCAM1. Integrin alpha-4/beta-1 recognizes the sequence Q-I-D-S in VCAM1. Integrin alpha-4/beta-7 is also a receptor for MADCAM1. It recognizes the sequence L-D-T in MADCAM1. On activated endothelial cells integrin VLA-4 triggers homotypic aggregation for most VLA-4-positive leukocyte cell lines. It may also participate in cytolytic T-cell interactions with target cells. ITGA4:ITGB1 binds to fractalkine (CX3CL1) and may act as its coreceptor in CX3CR1-dependent fractalkine signaling. ITGA4:ITGB1 binds to PLA2G2A via a site (site 2) which is distinct from the classical ligand-binding site (site 1) and this induces integrin conformational changes and enhanced ligand binding to site 1. Integrin ITGA4:ITGB1 represses PRKCA-mediated L-type voltage-gated channel Ca(2+) influx and ROCK-mediated calcium sensitivity in vascular smooth muscle cells via its interaction with SVEP1, thereby inhibiting vasocontraction. The sequence is that of Integrin alpha-4 (ITGA4) from Homo sapiens (Human).